The primary structure comprises 791 residues: IQ motif and ubiquitin-like domain-containing protein (791 aa).

Residues 1–73 (MSNQQEKYEA…SDQSFSSLEP (73 aa)) are disordered. The Ubiquitin-like domain maps to 131–207 (ATVKVVLIPV…VQVEIFSTNP (77 aa)). The 30-residue stretch at 338 to 367 (RLKAVIVIQTYYRQWHAKIFVENLRRQKSL) folds into the IQ domain.

As to quaternary structure, component of the axonemal radial spoke 1 (RS1) complex, at least composed of spoke head proteins RSPH1, RSPH3, RSPH9 and the cilia-specific component RSPH4A or sperm-specific component RSPH6A, spoke stalk proteins RSPH14, DNAJB13, DYDC1, ROPN1L and NME5, and the anchor protein IQUB. Does not appear to be part of radial spoke complexes 2 or 3 (RS2 or RS3). Interacts with CALM1. Interacts with DNAJB13. Interacts with DYNLL2. Interacts with NME5. Interacts with RSPH3. Interacts with RSPH9. Interacts with ZMYND10. Interacts with calmodulin; the interaction occurs in conditions of low but not high calcium.

It localises to the cytoplasm. It is found in the cytoskeleton. The protein localises to the flagellum axoneme. The protein resides in the cell projection. Its subcellular location is the cilium. Its function is as follows. Adapter protein that anchors the radial spoke 1 (RS1) complex to the A microtubule of outer doublet microtubules in axonemes. The triple radial spokes (RS1, RS2 and RS3) are required to modulate beating of the sperm flagellum. May play a role in inhibiting signaling via MAPK1/ERK2 and MAPK3/ERK1. Additionally, may play a role in the functioning of cilia. Not required for the functioning of tracheal or ependymal cilia. The sequence is that of IQ motif and ubiquitin-like domain-containing protein (IQUB) from Homo sapiens (Human).